An 81-amino-acid polypeptide reads, in one-letter code: Consomatin Le1 (81 aa).

An N-terminal signal peptide occupies residues 1 to 22; the sequence is MQTAYWVMVMMMVWITAPLSEG. A propeptide spanning residues 23–57 is cleaved from the precursor; sequence GKPNDVIRGLVPDDLTPQLILRSLISRRRSDKDVR. Glu-58 carries the 4-carboxyglutamate modification. Cys-62 and Cys-67 are disulfide-bonded. D-tryptophan is present on Trp-64. Pro-69 is modified (4-hydroxyproline). The propeptide occupies 71–81; the sequence is LWRRHDLKGKD.

It belongs to the conotoxin C superfamily. Consomatin family. In terms of tissue distribution, expressed by the venom duct.

The protein localises to the secreted. Functionally, moderately activates human somatostatin receptors (SSTR) with a preferential activation of SSTR1 and SSTR4. In vivo, does not cause behavioral changes in mice within a few minutes of intracranial injection, but causes a progressive loss of movement thereafter. Four to five hours after injection, mice recover, even with the highest dose tested. Shows antinociception and antihyperalgesia activities in two mouse models of acute pain, most probably by acting outside the central nervous system. The sequence is that of Consomatin Le1 from Conus lenavati (Cone snail).